The primary structure comprises 147 residues: uncharacterized protein (147 aa).

This is an uncharacterized protein from Ureaplasma parvum serovar 3 (strain ATCC 700970).